We begin with the raw amino-acid sequence, 73 residues long: Translation initiation factor IF-1 (73 aa).

One can recognise an S1-like domain in the interval Met-1–Arg-73.

The protein belongs to the IF-1 family. In terms of assembly, component of the 30S ribosomal translation pre-initiation complex which assembles on the 30S ribosome in the order IF-2 and IF-3, IF-1 and N-formylmethionyl-tRNA(fMet); mRNA recruitment can occur at any time during PIC assembly.

The protein resides in the cytoplasm. In terms of biological role, one of the essential components for the initiation of protein synthesis. Stabilizes the binding of IF-2 and IF-3 on the 30S subunit to which N-formylmethionyl-tRNA(fMet) subsequently binds. Helps modulate mRNA selection, yielding the 30S pre-initiation complex (PIC). Upon addition of the 50S ribosomal subunit IF-1, IF-2 and IF-3 are released leaving the mature 70S translation initiation complex. The polypeptide is Translation initiation factor IF-1 (Rhodopirellula baltica (strain DSM 10527 / NCIMB 13988 / SH1)).